Here is a 776-residue protein sequence, read N- to C-terminus: MASLIYRQLLSNSYVTNISDEVSEIGARKTANVTVNPGPFAQTGYAPVNWGHGELSDSTLVQPTLDGPYQPTTFNLPIDYWMLIAPTQIGRVAEGTNTTNRWFACVLVELNVQNTQREYVLDGQTVQLQVSNDSSTLWKFILFIKLEKNGTYTQYSTLSTSNKLCAWMKREGRVYSYAGVTPNASESYYLTINNDDSNVSSDAEFYLIPQSQTELCTQYINNGLPPIQNTRNVVPVSLTSREIRHSRAQMNEDIVVSKTSLWKEMQYNRDITIRFKFANSIVKSGGLGYKWSEISFKPMNYQYTYTRDGEEITAHTTCSVNGVNDFTYNGGPLPTDFAISRFEVIKENSYVYIDYWDDSQAFRNMVYVRSLAADLNDVVCSGGDYSFALPVGAYPIMSGGAVTLSPAGVTLSTQFTDYVSLNSLRFRFRLAVSEPSFSISRTRLSGIYGLPAANPNNSVEYYEIAGRFSLISLVPTNDDYQTPIANSVTVRQDLERQLGELREEFNSLSQEIALSQLIDLATLPLDMFSMFSGIKSTVEAVKSMTTNIMKKFKTSNLANAISDLTNSMSDAASSISRSASVRSIGSNTTMRISTAIQTGEDLRTMTDASTQISNVSRSLRLREFTTQTDNLSFDDISAAVLKTKLDKSTQISQTTIPDIISESSEKFIPMRTYRVMDNDTGFETGIDGTFYAYRIDTFDEIPFDVEKFNRLITDSPVLSAIIDFKTLKNLNDNYGITKTQAMELLQSNPRTLKEFINSNNPIIRNRIENLIAQCRL.

The spike head stretch occupies residues 65–224; sequence LDGPYQPTTF…LCTQYINNGL (160 aa). The segment at 248–479 is spike body and stalk (antigen domain); that stretch reads AQMNEDIVVS…LISLVPTNDD (232 aa). The DGE motif; interaction with ITGA2/ITGB1 heterodimer signature appears at 308 to 310; it reads DGE. Residues cysteine 318 and cysteine 380 are joined by a disulfide bond. A hydrophobic; possible role in virus entry into host cell region spans residues 389–409; it reads LPVGAYPIMSGGAVTLSPAGV. Residues 448–450 carry the YGL motif; interaction with ITGA4 motif; it reads YGL. Positions 484-511 form a coiled coil; it reads IANSVTVRQDLERQLGELREEFNSLSQE. Residues 510–776 are spike foot; sequence QEIALSQLID…IENLIAQCRL (267 aa).

This sequence belongs to the rotavirus VP4 family. As to quaternary structure, homotrimer. VP4 adopts a dimeric appearance above the capsid surface, while forming a trimeric base anchored inside the capsid layer. Only hints of the third molecule are observed above the capsid surface. It probably performs a series of molecular rearrangements during viral entry. Prior to trypsin cleavage, it is flexible. The priming trypsin cleavage triggers its rearrangement into rigid spikes with approximate two-fold symmetry of their protruding parts. After an unknown second triggering event, cleaved VP4 may undergo another rearrangement, in which two VP5* subunits fold back on themselves and join a third subunit to form a tightly associated trimer, shaped like a folded umbrella. Interacts with VP6. Interacts with VP7. Homotrimer. The trimer is coiled-coil stabilized by its C-terminus, however, its N-terminus, known as antigen domain or 'body', seems to be flexible allowing it to self-associate either as a dimer or a trimer. Post-translationally, proteolytic cleavage by trypsin results in activation of VP4 functions and greatly increases infectivity. The penetration into the host cell is dependent on trypsin treatment of VP4. It produces two peptides, VP5* and VP8* that remain associated with the virion. Cleavage of VP4 by trypsin probably occurs in vivo in the lumen of the intestine prior to infection of enterocytes. Trypsin seems to be incorporated into the three-layered viral particles but remains inactive as long as the viral outer capsid is intact and would only be activated upon the solubilization of the latter.

Its subcellular location is the virion. The protein resides in the host rough endoplasmic reticulum. It is found in the host cell membrane. It localises to the host cytoplasm. The protein localises to the host cytoskeleton. Its subcellular location is the host endoplasmic reticulum-Golgi intermediate compartment. Spike-forming protein that mediates virion attachment to the host epithelial cell receptors and plays a major role in cell penetration, determination of host range restriction and virulence. Rotavirus attachment and entry into the host cell probably involves multiple sequential contacts between the outer capsid proteins VP4 and VP7, and the cell receptors. It is subsequently lost, together with VP7, following virus entry into the host cell. Following entry into the host cell, low intracellular or intravesicular Ca(2+) concentration probably causes the calcium-stabilized VP7 trimers to dissociate from the virion. This step is probably necessary for the membrane-disrupting entry step and the release of VP4, which is locked onto the virion by VP7. During the virus exit from the host cell, VP4 seems to be required to target the newly formed virions to the host cell lipid rafts. Functionally, forms the spike 'foot' and 'body' and acts as a membrane permeabilization protein that mediates release of viral particles from endosomal compartments into the cytoplasm. During entry, the part of VP5* that protrudes from the virus folds back on itself and reorganizes from a local dimer to a trimer. This reorganization may be linked to membrane penetration by exposing VP5* hydrophobic region. In integrin-dependent strains, VP5* targets the integrin heterodimer ITGA2/ITGB1 for cell attachment. In terms of biological role, forms the head of the spikes and mediates the recognition of specific host cell surface glycans. It is the viral hemagglutinin and an important target of neutralizing antibodies. In sialic acid-dependent strains, VP8* binds to host cell sialic acid, most probably a ganglioside, providing the initial contact. In some other strains, VP8* mediates the attachment to histo-blood group antigens (HBGAs) for viral entry. This chain is Outer capsid protein VP4, found in Homo sapiens (Human).